We begin with the raw amino-acid sequence, 441 residues long: ATP-dependent RNA helicase SUB2 (441 aa).

A compositionally biased stretch (acidic residues) spans 1-17 (MSHEGEEELLDYSDSEE). The interval 1–47 (MSHEGEEELLDYSDSEEIALPSTTVESGSNGDAKAETTTVKEENTEQ) is disordered. A compositionally biased stretch (polar residues) spans 21–30 (PSTTVESGSN). Positions 33-46 (AKAETTTVKEENTE) are enriched in basic and acidic residues. Residues 57-85 (TGFRDFLLKPELLRAIVDCGFEHPSEVQQ) carry the Q motif motif. The Helicase ATP-binding domain occupies 88–263 (IPQSILGTDV…KKFMSSPLEI (176 aa)). 101–108 (AKAGVGKT) lines the ATP pocket. A DECD box motif is present at residues 210–213 (DECD). Residues 275–436 (GLQQYYVDVE…PYPAEGVDPS (162 aa)) form the Helicase C-terminal domain.

The protein belongs to the DEAD box helicase family. DECD subfamily.

It localises to the nucleus. It catalyses the reaction ATP + H2O = ADP + phosphate + H(+). Functionally, ATP-binding RNA helicase involved in transcription elongation and required for the export of mRNA out of the nucleus. SUB2 also plays a role in pre-mRNA splicing and spliceosome assembly. May be involved in rDNA and telomeric silencing, and maintenance of genome integrity. In Yarrowia lipolytica (strain CLIB 122 / E 150) (Yeast), this protein is ATP-dependent RNA helicase SUB2 (SUB2).